We begin with the raw amino-acid sequence, 149 residues long: Large ribosomal subunit protein bL9 (149 aa).

Belongs to the bacterial ribosomal protein bL9 family.

In terms of biological role, binds to the 23S rRNA. The sequence is that of Large ribosomal subunit protein bL9 from Actinobacillus pleuropneumoniae serotype 3 (strain JL03).